Reading from the N-terminus, the 910-residue chain is Putative disease resistance protein At1g58400 (910 aa).

Residues 15–57 adopt a coiled-coil conformation; the sequence is DRLTQEYEQFQGVEDRIAELKSNLNLLKSFLKDAEAKKNTSQM. One can recognise an NB-ARC domain in the interval 148 to 460; it reads REREMRQTFS…AEGILEPRHY (313 aa). 191–198 serves as a coordination point for ATP; it reads GMGGLGKT. LRR repeat units lie at residues 580–604 and 605–628; these read LELL…GIGK and LIHL…LGNL.

The protein belongs to the disease resistance NB-LRR family.

In terms of biological role, potential disease resistance protein. The chain is Putative disease resistance protein At1g58400 from Arabidopsis thaliana (Mouse-ear cress).